Reading from the N-terminus, the 438-residue chain is UPF0229 protein R01398 (438 aa).

The interval 55–107 is disordered; the sequence is PARGVNEPAFQPDSNSGERRHVLPGNREFAAGDRIPKRGSGGGAGNAGAGTGQ. Over residues 93–105 the composition is skewed to gly residues; it reads GSGGGAGNAGAGT.

The protein belongs to the UPF0229 family.

The polypeptide is UPF0229 protein R01398 (Rhizobium meliloti (strain 1021) (Ensifer meliloti)).